The primary structure comprises 112 residues: Integration host factor subunit alpha (112 aa).

Belongs to the bacterial histone-like protein family. Heterodimer of an alpha and a beta chain.

This protein is one of the two subunits of integration host factor, a specific DNA-binding protein that functions in genetic recombination as well as in transcriptional and translational control. This chain is Integration host factor subunit alpha, found in Rhizobium etli (strain CIAT 652).